The chain runs to 151 residues: Large ribosomal subunit protein bL9 (151 aa).

The protein belongs to the bacterial ribosomal protein bL9 family.

In terms of biological role, binds to the 23S rRNA. This Francisella philomiragia subsp. philomiragia (strain ATCC 25017 / CCUG 19701 / FSC 153 / O#319-036) protein is Large ribosomal subunit protein bL9.